The following is a 294-amino-acid chain: Small ribosomal subunit protein uS2 (294 aa).

Positions 256–274 are enriched in basic and acidic residues; it reads SGKFIMDEDPDSKKTKTAE. Positions 256–294 are disordered; the sequence is SGKFIMDEDPDSKKTKTAEEPSATIEPSTTTTVEVDQNE. A compositionally biased stretch (polar residues) spans 280–294; sequence IEPSTTTTVEVDQNE.

Belongs to the universal ribosomal protein uS2 family.

In Leptospira interrogans serogroup Icterohaemorrhagiae serovar Lai (strain 56601), this protein is Small ribosomal subunit protein uS2.